The primary structure comprises 145 residues: uncharacterized protein (145 aa).

A disordered region spans residues 1–49 (MLSIFKNLLGTSEEDGTTQEANSKDTKGLKEERKRKKRKNKYKIPPGHT). The segment covering 22–32 (NSKDTKGLKEE) has biased composition (basic and acidic residues). Basic residues predominate over residues 33-42 (RKRKKRKNKY). Phosphoserine is present on Ser-68. A Cytochrome b5 heme-binding domain is found at 69–145 (PISVTAEELA…LKTSFVGYLV (77 aa)). The heme site is built by His-104 and His-127.

The protein belongs to the cytochrome b5 family.

Its subcellular location is the cytoplasm. This is an uncharacterized protein from Schizosaccharomyces pombe (strain 972 / ATCC 24843) (Fission yeast).